The primary structure comprises 203 residues: Small ribosomal subunit protein uS4 (203 aa).

Residues arginine 93–lysine 153 enclose the S4 RNA-binding domain.

The protein belongs to the universal ribosomal protein uS4 family. Part of the 30S ribosomal subunit. Contacts protein S5. The interaction surface between S4 and S5 is involved in control of translational fidelity.

Its function is as follows. One of the primary rRNA binding proteins, it binds directly to 16S rRNA where it nucleates assembly of the body of the 30S subunit. Functionally, with S5 and S12 plays an important role in translational accuracy. This is Small ribosomal subunit protein uS4 from Lactobacillus delbrueckii subsp. bulgaricus (strain ATCC 11842 / DSM 20081 / BCRC 10696 / JCM 1002 / NBRC 13953 / NCIMB 11778 / NCTC 12712 / WDCM 00102 / Lb 14).